The sequence spans 304 residues: Agmatinase (304 aa).

Mn(2+) contacts are provided by H126, D149, H151, D153, D230, and D232.

The protein belongs to the arginase family. Agmatinase subfamily. The cofactor is Mn(2+).

It carries out the reaction agmatine + H2O = urea + putrescine. Its pathway is amine and polyamine biosynthesis; putrescine biosynthesis via agmatine pathway; putrescine from agmatine: step 1/1. In terms of biological role, catalyzes the formation of putrescine from agmatine. The polypeptide is Agmatinase (Edwardsiella ictaluri (strain 93-146)).